A 348-amino-acid polypeptide reads, in one-letter code: Papaya proteinase 4 (348 aa).

The signal sequence occupies residues 1 to 18 (MAIICSFSKLLFVAICLF). A propeptide spans 19 to 132 (GHMSLSYCDF…EEFVNEDIVD (114 aa)) (activation peptide). 3 disulfides stabilise this stretch: Cys-154-Cys-195, Cys-188-Cys-227, and Cys-285-Cys-336. Residue Cys-157 is part of the active site. Catalysis depends on residues His-291 and Asn-311.

Belongs to the peptidase C1 family.

It carries out the reaction Preferential cleavage: Gly-|-Xaa, in proteins and in small molecule substrates.. Its activity is regulated as follows. Not inhibited by cystatin. Thiol protease with a substrate specificity very different from the other thiol proteases. This is Papaya proteinase 4 from Carica papaya (Papaya).